A 474-amino-acid polypeptide reads, in one-letter code: Solute carrier family 49 member A3 (474 aa).

Residues 1–20 (MEGESAETEPLIQSSSAADR) form a disordered region. 12 consecutive transmembrane segments (helical) span residues 38-58 (WFIL…WLTF), 69-89 (LCVS…AAVV), 105-126 (CSLI…CGVL), 134-154 (VFAV…LVIF), 175-195 (LASM…PLIV), 201-221 (LFLL…LATL), 258-278 (WILL…STLL), 290-310 (GFAG…AFLL), 326-346 (ICMC…QLPA), 349-369 (VLLV…YPVG), 388-408 (LIFT…QALA), and 428-448 (VPVL…VVFF).

It belongs to the major facilitator superfamily.

The protein resides in the membrane. In Danio rerio (Zebrafish), this protein is Solute carrier family 49 member A3 (slc49a3).